The following is a 150-amino-acid chain: AN1-type zinc finger protein TMC1 (150 aa).

Residues 1 to 82 (MSDINEIEIP…TKKTTKKKKK (82 aa)) are disordered. Ser2 carries the N-acetylserine modification. Residues 23–33 (DPMHEIEDKST) show a composition bias toward basic and acidic residues. Phosphoserine occurs at positions 43 and 54. A compositionally biased stretch (low complexity) spans 53 to 70 (NSRSSSNSSVTSTGQSSR). Basic residues predominate over residues 71-82 (RVTKKTTKKKKK). The AN1-type zinc-finger motif lies at 79-128 (KKKKNACYFDTCSSAASKFIGDCNFCKGHFCSKHRLMENHACNGLTSCKE). Zn(2+)-binding residues include Cys85, Cys90, Cys101, Cys104, Cys109, His112, His118, and Cys120.

The protein resides in the nucleus. In terms of biological role, may have a role in protecting cells from metalloid-induced proteotoxicity. This is AN1-type zinc finger protein TMC1 from Saccharomyces cerevisiae (strain ATCC 204508 / S288c) (Baker's yeast).